Reading from the N-terminus, the 418-residue chain is 3-isopropylmalate dehydratase large subunit (418 aa).

[4Fe-4S] cluster contacts are provided by cysteine 297, cysteine 357, and cysteine 360.

This sequence belongs to the aconitase/IPM isomerase family. LeuC type 2 subfamily. As to quaternary structure, heterodimer of LeuC and LeuD. It depends on [4Fe-4S] cluster as a cofactor.

The catalysed reaction is (2R,3S)-3-isopropylmalate = (2S)-2-isopropylmalate. Its pathway is amino-acid biosynthesis; L-leucine biosynthesis; L-leucine from 3-methyl-2-oxobutanoate: step 2/4. Its function is as follows. Catalyzes the isomerization between 2-isopropylmalate and 3-isopropylmalate, via the formation of 2-isopropylmaleate. In Elusimicrobium minutum (strain Pei191), this protein is 3-isopropylmalate dehydratase large subunit.